Here is a 417-residue protein sequence, read N- to C-terminus: Zinc finger CCCH domain-containing protein ZFN-like (417 aa).

2 consecutive C3H1-type zinc fingers follow at residues 31–58 (PGEPDCSYYIRTGLCRFGATCRFNHPPN) and 75–103 (RLGQPECQYYLKTGTCKFGATCRFHHPKD). The C3H1-type 3; degenerate zinc finger occupies 121-149 (RPNESERAYYLRTGQCKFGNTCKFHHPQP). 2 consecutive C3H1-type zinc fingers follow at residues 278 to 306 (RPDQPECQFYMKTGDCKFGAVCRFHHPRE) and 324 to 352 (RPGEPLCVFYSRYGICKFGPSCKFDHPMG). Positions 383–417 (SSEGLVESGTAKPRRLSLSETRPIPPGDDNIDDEG) are disordered.

Its subcellular location is the nucleus. The chain is Zinc finger CCCH domain-containing protein ZFN-like from Pisum sativum (Garden pea).